A 1222-amino-acid chain; its full sequence is PAN2-PAN3 deadenylation complex catalytic subunit PAN2 (1222 aa).

2 WD repeats span residues 104-143 and 276-315; these read PEMT…IVDQ and ANVA…HFNE. Residues 316–451 form a linker region; the sequence is IGKETEFSDI…GLKINGETKE (136 aa). One can recognise a USP domain in the interval 452 to 821; the sequence is DPLLKYSNVE…SPCTLAYQIS (370 aa). The 157-residue stretch at 871–1027 folds into the Exonuclease domain; that stretch reads ALDTEFVDLE…WAVFKEYIQE (157 aa). 3 residues coordinate a divalent metal cation: D873, E875, and D982. The disordered stretch occupies residues 1035–1067; that stretch reads TSITTTTNPNIHDANTSTTTTTAITTTPPEGHD. Low complexity predominate over residues 1050 to 1061; sequence TSTTTTTAITTT. D1071 contacts a divalent metal cation. Disordered stretches follow at residues 1110-1152 and 1167-1222; these read PARY…LSGR and ASVT…SPMR. Low complexity predominate over residues 1119-1133; that stretch reads PNPNNNNINNGVNPN. Residues 1134–1144 are compositionally biased toward polar residues; that stretch reads GLSTPGSTNPI. Positions 1180–1191 are enriched in low complexity; sequence NGSMSGSTPSTP. The span at 1207–1216 shows a compositional bias: gly residues; it reads SFGGAKGLTF.

It belongs to the peptidase C19 family. PAN2 subfamily. Forms a heterotrimer with an asymmetric homodimer of the regulatory subunit PAN3 to form the poly(A)-nuclease (PAN) deadenylation complex. The cofactor is a divalent metal cation.

The protein localises to the cytoplasm. It carries out the reaction Exonucleolytic cleavage of poly(A) to 5'-AMP.. Its activity is regulated as follows. Positively regulated by the regulatory subunit PAN3. Its function is as follows. Catalytic subunit of the poly(A)-nuclease (PAN) deadenylation complex, one of two cytoplasmic mRNA deadenylases involved in mRNA turnover. PAN specifically shortens poly(A) tails of RNA and the activity is stimulated by poly(A)-binding protein PAB1. PAN deadenylation is followed by rapid degradation of the shortened mRNA tails by the CCR4-NOT complex. Deadenylated mRNAs are then degraded by two alternative mechanisms, namely exosome-mediated 3'-5' exonucleolytic degradation, or deadenylation-dependent mRNA decaping and subsequent 5'-3' exonucleolytic degradation by XRN1. May also be involved in post-transcriptional maturation of mRNA poly(A) tails. The sequence is that of PAN2-PAN3 deadenylation complex catalytic subunit PAN2 from Coccidioides immitis (strain RS) (Valley fever fungus).